Here is a 341-residue protein sequence, read N- to C-terminus: MVANPGGGSTDAGGGPVRHIPVLLDEVLSALAPAPGKLILDGTFGAGGYSSAILAAGAEVIALDRDPTAIASGQAMVAAHGGRLKLVHSQFSHLADHAPQGGLDGVVLDIGVSSMQIDEAERGFSFQKNGPLDMRMSAAGVSAADVVNRAKVADLIRIFHFLGEESQAPRIAHAIEKRREEKPFETTRDLAGLIELVTPRKMKDKIHPATRVFQALRIFVNDELGELAQALFAAEAALKPGGRLVVVTFHSLEDRIVKKFFSDRAGKASGSRHLPVAHERAATFAAIGKPMVSASEAEAEINPRARSAKLRAGLRTEAAAEAADMSLFGFPNLASLGKLGG.

S-adenosyl-L-methionine-binding positions include 47–49 (GGY), Asp-64, Phe-91, Asp-109, and Gln-116.

Belongs to the methyltransferase superfamily. RsmH family.

It is found in the cytoplasm. The enzyme catalyses cytidine(1402) in 16S rRNA + S-adenosyl-L-methionine = N(4)-methylcytidine(1402) in 16S rRNA + S-adenosyl-L-homocysteine + H(+). Its function is as follows. Specifically methylates the N4 position of cytidine in position 1402 (C1402) of 16S rRNA. The protein is Ribosomal RNA small subunit methyltransferase H of Rhizobium leguminosarum bv. trifolii (strain WSM2304).